The chain runs to 514 residues: Probable endopolygalacturonase D (514 aa).

A signal peptide spans 1-16 (MKRCALLTPLLPLALA). A disordered region spans residues 134 to 166 (IKSSSPGPSSSFAAAATTEAPTSTRASPYTPYT). The span at 136–166 (SSSPGPSSSFAAAATTEAPTSTRASPYTPYT) shows a compositional bias: low complexity. Residues Cys-173 and Cys-188 are joined by a disulfide bond. A glycan (N-linked (GlcNAc...) asparagine) is linked at Asn-240. PbH1 repeat units follow at residues 280-302 (VYNS…DIEN), 303-341 (TESL…DIKS), 342-363 (STDL…AITS), 364-384 (GTNI…SIGS), 393-414 (VDGV…RIKT), 422-444 (VSNI…VVQQ), and 456-500 (SNGV…SITG). Residues 312–335 (TLDNSAGDEPNDSSDGDPAAHNSD) are disordered. Asn-322 carries an N-linked (GlcNAc...) asparagine glycan. The active-site Proton donor is the Asp-356. A disulfide bridge links Cys-358 with Cys-374. Residue Asn-366 is glycosylated (N-linked (GlcNAc...) asparagine). His-378 is an active-site residue. N-linked (GlcNAc...) asparagine glycosylation is present at Asn-429. The cysteines at positions 483 and 488 are disulfide-linked. An N-linked (GlcNAc...) asparagine glycan is attached at Asn-490. The cysteines at positions 506 and 513 are disulfide-linked.

This sequence belongs to the glycosyl hydrolase 28 family.

Its subcellular location is the secreted. The enzyme catalyses (1,4-alpha-D-galacturonosyl)n+m + H2O = (1,4-alpha-D-galacturonosyl)n + (1,4-alpha-D-galacturonosyl)m.. Involved in maceration and soft-rotting of plant tissue. Hydrolyzes the 1,4-alpha glycosidic bonds of de-esterified pectate in the smooth region of the plant cell wall. The sequence is that of Probable endopolygalacturonase D (pgaD) from Emericella nidulans (strain FGSC A4 / ATCC 38163 / CBS 112.46 / NRRL 194 / M139) (Aspergillus nidulans).